The following is a 753-amino-acid chain: Rsm22-cox11 tandem protein 1, mitochondrial (753 aa).

The transit peptide at 1–39 (MPILTCRYKILFLYNLRNCFTFQNQRCLIPYGTTTTIRW) directs the protein to the mitochondrion. Positions 323, 329, 342, and 430 each coordinate [4Fe-4S] cluster. The chain crosses the membrane as a helical span at residues 571 to 591 (IYYLVAISIFALGLTYAAVPL). Residues 592–753 (YRLFCSKTGY…TNGNLLTKLN (162 aa)) are Mitochondrial intermembrane-facing.

The protein in the N-terminal section; belongs to the methyltransferase superfamily. Rsm22 family. It in the C-terminal section; belongs to the COX11/CtaG family. In terms of assembly, associates with the mitochondrial ribosome (mitoribosome). Only transiently interacts with the mitoribosome. In terms of processing, specific enzymatic cleavages in vivo by mitochondrial processing peptidase (MPP) yield mature proteins including rsm22-1 and cox11-1.

It is found in the mitochondrion. The protein localises to the mitochondrion inner membrane. Mitochondrial ribosome (mitoribosome) assembly factor. Binds at the interface of the head and body domains of the mitochondrial small ribosomal subunit (mt-SSU), occluding the mRNA channel and preventing compaction of the head domain towards the body. Probable inactive methyltransferase: retains the characteristic folding and ability to bind S-adenosyl-L-methionine, but it probably lost its methyltransferase activity. Functionally, exerts its effect at some terminal stage of cytochrome c oxidase synthesis, probably by being involved in the insertion of the copper B into subunit I. This chain is Rsm22-cox11 tandem protein 1, mitochondrial (cox1101), found in Schizosaccharomyces pombe (strain 972 / ATCC 24843) (Fission yeast).